The primary structure comprises 543 residues: Chaperonin GroEL (543 aa).

Residues 30–33, Lys-51, 87–91, Gly-415, and Asp-496 each bind ATP; these read TLGP and DGTTT.

Belongs to the chaperonin (HSP60) family. As to quaternary structure, forms a cylinder of 14 subunits composed of two heptameric rings stacked back-to-back. Interacts with the co-chaperonin GroES.

The protein localises to the cytoplasm. It catalyses the reaction ATP + H2O + a folded polypeptide = ADP + phosphate + an unfolded polypeptide.. In terms of biological role, together with its co-chaperonin GroES, plays an essential role in assisting protein folding. The GroEL-GroES system forms a nano-cage that allows encapsulation of the non-native substrate proteins and provides a physical environment optimized to promote and accelerate protein folding. In Gluconobacter oxydans (strain 621H) (Gluconobacter suboxydans), this protein is Chaperonin GroEL.